Consider the following 48-residue polypeptide: Cuticle protein 10 (48 aa).

The protein is Cuticle protein 10 of Limulus polyphemus (Atlantic horseshoe crab).